A 133-amino-acid polypeptide reads, in one-letter code: CDGSH iron-sulfur domain protein (133 aa).

Residues 1 to 35 (MEPISHLVKSSLPNYLSSLPVPDSIGGWFKLSFKD) lie on the Lumenal side of the membrane. A helical transmembrane segment spans residues 36–58 (WLALIPPTVVVAGLGYTAYLAYC). Topologically, residues 59 to 133 (PAARASCAAK…DNVGPIVIKK (75 aa)) are cytoplasmic. The [2Fe-2S] cluster site is built by Cys100, Cys102, Cys111, and His115.

This sequence belongs to the CISD protein family. CISD2 subfamily. [2Fe-2S] cluster is required as a cofactor.

The protein resides in the endoplasmic reticulum membrane. In Drosophila melanogaster (Fruit fly), this protein is CDGSH iron-sulfur domain protein.